Reading from the N-terminus, the 162-residue chain is Caveolin-2 (162 aa).

Topologically, residues 1–86 (MGLETEKADV…FEISKYVMYK (86 aa)) are cytoplasmic. Tyr-19 carries the post-translational modification Phosphotyrosine; by SRC. Ser-20 is subject to Phosphoserine. The residue at position 27 (Tyr-27) is a Phosphotyrosine; by SRC. Residue Ser-36 is modified to Phosphoserine. Residues 87 to 107 (FLTVFLAIPLAFAAGILFATL) constitute an intramembrane region (helical). Over 108-162 (SCLHIWIIMPFVKTCLMVLPSVQTIWKSVTDVIIAPLCTSVGRSLSSISLQLSHD) the chain is Cytoplasmic.

It belongs to the caveolin family. Monomer or homodimer. Interacts with CAV1; the interaction forms a stable heterooligomeric complex that is required for targeting to lipid rafts and for caveolae formation. Tyrosine phosphorylated forms do not form heterooligomers with the Tyr-19-phosphorylated form existing as a monomer or dimer, and the Tyr-27-form as a monomer only. Interacts (tyrosine phosphorylated form) with the SH2 domain-containing proteins, RASA1, NCK1 and SRC. Interacts (tyrosine phosphorylated form) with INSR, the interaction (Tyr-27-phosphorylated form) is increased on insulin stimulation. Interacts (Tyr-19 phosphorylated form) with MAPK1 (phosphorylated form); the interaction, promoted by insulin, leads to nuclear location and MAPK1 activation. Interacts with STAT3; the interaction is increased on insulin-induced tyrosine phosphorylation leading to STAT activation. In terms of processing, phosphorylated on serine and tyrosine residues. Phosphorylation on Ser-36 appears to modulate mitosis in endothelial cells. Phosphorylation on both Tyr-19 and Tyr-27 is required for insulin-induced 'Ser-727' phosphorylation of STAT3 and its activation. Phosphorylation on Tyr-19 is required for insulin-induced phosphorylation of MAPK1 and DNA binding of STAT3. Tyrosine phosphorylation is induced by both EGF and insulin.

The protein resides in the nucleus. It localises to the cytoplasm. It is found in the golgi apparatus membrane. Its subcellular location is the cell membrane. The protein localises to the membrane. The protein resides in the caveola. Its function is as follows. May act as a scaffolding protein within caveolar membranes. Interacts directly with G-protein alpha subunits and can functionally regulate their activity. Acts as an accessory protein in conjunction with CAV1 in targeting to lipid rafts and driving caveolae formation. The Ser-36 phosphorylated form has a role in modulating mitosis in endothelial cells. Positive regulator of cellular mitogenesis of the MAPK signaling pathway. Required for the insulin-stimulated nuclear translocation and activation of MAPK1 and STAT3, and the subsequent regulation of cell cycle progression. This chain is Caveolin-2 (CAV2), found in Eulemur macaco macaco (Black lemur).